A 627-amino-acid polypeptide reads, in one-letter code: UvrABC system protein C (627 aa).

The region spanning 26 to 105 (PEPGVYFMRD…IKQHQPYFNV (80 aa)) is the GIY-YIG domain. The UVR domain occupies 215-250 (QELIDILSEQMEKAAEALNFEVAARIRDQIAGLKSL).

This sequence belongs to the UvrC family. In terms of assembly, interacts with UvrB in an incision complex.

Its subcellular location is the cytoplasm. The UvrABC repair system catalyzes the recognition and processing of DNA lesions. UvrC both incises the 5' and 3' sides of the lesion. The N-terminal half is responsible for the 3' incision and the C-terminal half is responsible for the 5' incision. The protein is UvrABC system protein C of Nostoc sp. (strain PCC 7120 / SAG 25.82 / UTEX 2576).